A 158-amino-acid polypeptide reads, in one-letter code: MFDGIGFMELLLIGVLGLVVLGPERLPVAVRSVTGWIRAMKRMANSVKEELEQELKIEQLHADLKKAESKGLSNLSPELKESIEQLKQAAQSVNRPYQVQDSSSQGTAAPDNQIHSPAQVSQTNPTTPLETSQHLTSPAAHNEPSQGVDTSSNPKANG.

The helical transmembrane segment at Phe2–Gly22 threads the bilayer. The segment at Leu86–Gly158 is disordered. Composition is skewed to polar residues over residues Gln88–Thr107, Gln113–Thr136, and Glu143–Gly158.

It belongs to the TatB family. In terms of assembly, the Tat system comprises two distinct complexes: a TatABC complex, containing multiple copies of TatA, TatB and TatC subunits, and a separate TatA complex, containing only TatA subunits. Substrates initially bind to the TatABC complex, which probably triggers association of the separate TatA complex to form the active translocon.

Its subcellular location is the cell inner membrane. Its function is as follows. Part of the twin-arginine translocation (Tat) system that transports large folded proteins containing a characteristic twin-arginine motif in their signal peptide across membranes. Together with TatC, TatB is part of a receptor directly interacting with Tat signal peptides. TatB may form an oligomeric binding site that transiently accommodates folded Tat precursor proteins before their translocation. The sequence is that of Sec-independent protein translocase protein TatB from Shewanella putrefaciens (strain CN-32 / ATCC BAA-453).